The following is a 98-amino-acid chain: uncharacterized protein (98 aa).

This is an uncharacterized protein from Rickettsia conorii (strain ATCC VR-613 / Malish 7).